Reading from the N-terminus, the 351-residue chain is Uroporphyrinogen decarboxylase (351 aa).

Residues 25–29 (RQAGR), Asp74, Tyr151, Ser206, and His325 contribute to the substrate site.

It belongs to the uroporphyrinogen decarboxylase family. As to quaternary structure, homodimer.

It localises to the cytoplasm. The catalysed reaction is uroporphyrinogen III + 4 H(+) = coproporphyrinogen III + 4 CO2. It participates in porphyrin-containing compound metabolism; protoporphyrin-IX biosynthesis; coproporphyrinogen-III from 5-aminolevulinate: step 4/4. Functionally, catalyzes the decarboxylation of four acetate groups of uroporphyrinogen-III to yield coproporphyrinogen-III. The chain is Uroporphyrinogen decarboxylase from Chlorobaculum parvum (strain DSM 263 / NCIMB 8327) (Chlorobium vibrioforme subsp. thiosulfatophilum).